A 187-amino-acid polypeptide reads, in one-letter code: Flavin prenyltransferase UbiX (187 aa).

FMN-binding positions include 9–11 (GAS), Ser34, and Arg123. Residues Tyr153 and Lys169 each coordinate dimethylallyl phosphate.

It belongs to the UbiX/PAD1 family.

It catalyses the reaction dimethylallyl phosphate + FMNH2 = prenylated FMNH2 + phosphate. Functionally, flavin prenyltransferase that catalyzes the synthesis of the prenylated FMN cofactor (prenyl-FMN) for 4-hydroxy-3-polyprenylbenzoic acid decarboxylase UbiD. The prenyltransferase is metal-independent and links a dimethylallyl moiety from dimethylallyl monophosphate (DMAP) to the flavin N5 and C6 atoms of FMN. The chain is Flavin prenyltransferase UbiX from Helicobacter pylori (strain J99 / ATCC 700824) (Campylobacter pylori J99).